We begin with the raw amino-acid sequence, 211 residues long: Peptidyl-prolyl cis-trans isomerase FKBP14 (211 aa).

The first 19 residues, M1–G19, serve as a signal peptide directing secretion. A disulfide bridge connects residues C38 and C96. The 91-residue stretch at G45–R135 folds into the PPIase FKBP-type domain. Positions R135–K170 constitute an EF-hand 1 domain. D148, N150, D152, K154, and E159 together coordinate Ca(2+). N-linked (GlcNAc...) asparagine glycosylation occurs at N176. Residues H179–L211 form the EF-hand 2 domain. Residues D192, D194, D196, F198, and E203 each contribute to the Ca(2+) site. Residues H208–L211 carry the Prevents secretion from ER motif.

As to quaternary structure, monomer. Homodimer. Interacts with type III, type IV and type X collagens.

It localises to the endoplasmic reticulum lumen. It catalyses the reaction [protein]-peptidylproline (omega=180) = [protein]-peptidylproline (omega=0). With respect to regulation, inhibited by tacrolimus/FK506. Functionally, PPIase which accelerates the folding of proteins during protein synthesis. Has a preference for substrates containing 4-hydroxylproline modifications, including type III collagen. May also target type VI and type X collagens. The protein is Peptidyl-prolyl cis-trans isomerase FKBP14 (FKBP14) of Homo sapiens (Human).